Reading from the N-terminus, the 185-residue chain is Hypoxanthine/guanine phosphoribosyltransferase (185 aa).

The protein belongs to the purine/pyrimidine phosphoribosyltransferase family. Archaeal HPRT subfamily. Homodimer.

It is found in the cytoplasm. It carries out the reaction IMP + diphosphate = hypoxanthine + 5-phospho-alpha-D-ribose 1-diphosphate. The catalysed reaction is GMP + diphosphate = guanine + 5-phospho-alpha-D-ribose 1-diphosphate. It functions in the pathway purine metabolism; IMP biosynthesis via salvage pathway; IMP from hypoxanthine: step 1/1. In terms of biological role, catalyzes a salvage reaction resulting in the formation of IMP that is energically less costly than de novo synthesis. This chain is Hypoxanthine/guanine phosphoribosyltransferase, found in Methanococcus maripaludis (strain C7 / ATCC BAA-1331).